We begin with the raw amino-acid sequence, 105 residues long: Cell division topological specificity factor (105 aa).

The protein belongs to the MinE family.

Prevents the cell division inhibition by proteins MinC and MinD at internal division sites while permitting inhibition at polar sites. This ensures cell division at the proper site by restricting the formation of a division septum at the midpoint of the long axis of the cell. The polypeptide is Cell division topological specificity factor (Prochlorococcus marinus (strain MIT 9515)).